The sequence spans 572 residues: Proline--tRNA ligase (572 aa).

This sequence belongs to the class-II aminoacyl-tRNA synthetase family. ProS type 1 subfamily. Homodimer.

The protein localises to the cytoplasm. It carries out the reaction tRNA(Pro) + L-proline + ATP = L-prolyl-tRNA(Pro) + AMP + diphosphate. Catalyzes the attachment of proline to tRNA(Pro) in a two-step reaction: proline is first activated by ATP to form Pro-AMP and then transferred to the acceptor end of tRNA(Pro). As ProRS can inadvertently accommodate and process non-cognate amino acids such as alanine and cysteine, to avoid such errors it has two additional distinct editing activities against alanine. One activity is designated as 'pretransfer' editing and involves the tRNA(Pro)-independent hydrolysis of activated Ala-AMP. The other activity is designated 'posttransfer' editing and involves deacylation of mischarged Ala-tRNA(Pro). The misacylated Cys-tRNA(Pro) is not edited by ProRS. This is Proline--tRNA ligase from Klebsiella pneumoniae subsp. pneumoniae (strain ATCC 700721 / MGH 78578).